The sequence spans 101 residues: Protein SSXA1 (101 aa).

One can recognise a KRAB-related domain in the interval 19 to 83; the sequence is ETCQAFEDIS…ERVTKSVLSD (65 aa). The disordered stretch occupies residues 73–101; the sequence is KERVTKSVLSDSDEVSSHESQDKRKNPVV. Basic and acidic residues predominate over residues 87 to 101; it reads VSSHESQDKRKNPVV.

It belongs to the SSX family. In terms of tissue distribution, specifically expressed in testis (at protein level). Not detected in other tissues tested (at protein level).

It localises to the nucleus. In terms of biological role, could act as a modulator of transcription. This is Protein SSXA1 from Mus musculus (Mouse).